We begin with the raw amino-acid sequence, 472 residues long: Transmembrane protein 8B (472 aa).

Positions 1–10 (MNMPQSLGTQ) are enriched in low complexity. Residues 1-24 (MNMPQSLGTQPLPPEPPSLGTPIE) form a disordered region. Residues 1–233 (MNMPQSLGTQ…ADALTYGFQL (233 aa)) are Extracellular-facing. N-linked (GlcNAc...) asparagine glycosylation occurs at Asn100. One can recognise an EGF-like domain in the interval 182 to 221 (FLSPCVDDCGPYGQCKLLRTHNYLYAACECKAGWRGWGCT). Cystine bridges form between Cys186-Cys196, Cys190-Cys209, and Cys211-Cys220. The helical transmembrane segment at 234–254 (LSTLLLCLSNLMFLPPVVLAI) threads the bilayer. Residues 255-257 (RSR) are Cytoplasmic-facing. The chain crosses the membrane as a helical span at residues 258–277 (YVLEAAVYTFTMFFSTFYHA). Residues 278–292 (CDQPGIVVFCIMDYD) lie on the Extracellular side of the membrane. The chain crosses the membrane as a helical span at residues 293-313 (VLQFCDFLGSLMSVWVTVIAM). The Cytoplasmic segment spans residues 314-315 (AR). The helical transmembrane segment at 316-336 (LQPVIKQVLYLLGAMLLSMAL) threads the bilayer. Over 337 to 342 (QLDRHG) the chain is Extracellular. A helical membrane pass occupies residues 343-363 (LWNLLGPSLFALGILATAWTV). At 364 to 379 (RSVRRRHCYPPTWRRW) the chain is on the cytoplasmic side. The chain crosses the membrane as a helical span at residues 380-400 (LFYLCPGSLIAGSAVLLYAFV). Residues 401–405 (ETRDN) are Extracellular-facing. A helical membrane pass occupies residues 406–426 (YFYIHSIWHMLIAGSVGFLLP). Residues 427–472 (PRAKTDRRVPSGARARGCGYQLCINEQEELGLVGPGGTTVSSICVS) lie on the Cytoplasmic side of the membrane.

It belongs to the TMEM8 family. In terms of assembly, may interact with EZR. In terms of processing, N-glycosylated.

It localises to the cell membrane. The protein localises to the cytoplasm. Its subcellular location is the nucleus. The protein resides in the mitochondrion. It is found in the endoplasmic reticulum. In terms of biological role, may function as a regulator of the EGFR pathway. Probable tumor suppressor which may function in cell growth, proliferation and adhesion. The polypeptide is Transmembrane protein 8B (Tmem8b) (Mus musculus (Mouse)).